Consider the following 120-residue polypeptide: Small ribosomal subunit protein uS13 (120 aa).

Residues 94-120 (GLPLRGQRTRTNARTRKGPRKAIAGKK) are disordered.

The protein belongs to the universal ribosomal protein uS13 family. As to quaternary structure, part of the 30S ribosomal subunit. Forms a loose heterodimer with protein S19. Forms two bridges to the 50S subunit in the 70S ribosome.

In terms of biological role, located at the top of the head of the 30S subunit, it contacts several helices of the 16S rRNA. In the 70S ribosome it contacts the 23S rRNA (bridge B1a) and protein L5 of the 50S subunit (bridge B1b), connecting the 2 subunits; these bridges are implicated in subunit movement. Contacts the tRNAs in the A and P-sites. The sequence is that of Small ribosomal subunit protein uS13 from Azoarcus sp. (strain BH72).